Here is a 612-residue protein sequence, read N- to C-terminus: Breast cancer type 1 susceptibility protein homolog (612 aa).

The segment at 21–61 adopts an RING-type zinc-finger fold; it reads CGICCSTYKDPILSTCFHIFCRSCINACFERKRKVQCPICR. A disordered region spans residues 140 to 173; sequence RRKRPSRPQPPSAFAEEPAEPVEPPEPATKQPVE. 2 consecutive BRCT domains span residues 415-477 and 505-603; these read RFAE…DYTI and EHGK…PYKA.

Heterodimer (via RING-type zinc finger) with brd-1 to form the core CeBCD complex. Brc-1-brd-1 heterodimer-containing CeBCD complexes bound to chromatin are activated as an E3-ubiquitin ligase in response to DNA damage. The heterodimer interacts with the recombinase rad-51 following ionizing irradiation; the interaction is direct. The heterodimer interacts the E2-ubiquitin-conjugating enzyme let-70 following ionizing irradiation. The heterodimer interacts with the pro-crossover proteins msh-5 and syp-3. Post-translationally, phosphorylation of CeBCD complexes is required for E3 ubiquitin-protein ligase activity.

The protein resides in the nucleus. Its subcellular location is the chromosome. It is found in the cytoplasm. It catalyses the reaction S-ubiquitinyl-[E2 ubiquitin-conjugating enzyme]-L-cysteine + [acceptor protein]-L-lysine = [E2 ubiquitin-conjugating enzyme]-L-cysteine + N(6)-ubiquitinyl-[acceptor protein]-L-lysine.. The protein operates within protein modification; protein ubiquitination. Its activity is regulated as follows. E3 ubiquitin-protein ligase activity of CeBCD complexes occurs at DNA damage sites. Following DNA damage, E3 ubiquitin-protein ligase activity is reduced by caffeine treatment (inhibitor of ATM and ATK kinase activity). Functionally, E3 ubiquitin-protein ligase that specifically mediates the formation of polyubiquitin chains and plays a central role in DNA repair. Plays a role in triggering cellular responses at damage sites in response to DNA damage that may be induced by UV and ionizing radiation for example. Functions in double-strand break repair, and is required for homologous recombination between sister chromatids in meiotic and mitotic cells. In particular, protects against chromosome non-disjunction and nuclear fragmentation during meiotic double-strand break repair to ensure sister chromatid recombination and aid chromosome stability. Required for normal cell cycle progression. Along with brap-2 modulates the expression of cell cycle arrest protein cki-1 in response to increased levels of reactive oxygen species. Constituent of the CeBCD complex that possesses E3 ubiquitin-protein ligase activity. When bound to chromatin, the brc-1-brd-1 heterodimer within the CeBCD complex is inactive during normal conditions, but in response to DNA damage, the brc-1-brd-1 heterodimer associates with other proteins such as the recombinase rad-51 or the E2-ubiquitin-conjugating enzyme let-70, which activate the CeBCD complex as an E3-ubiquitin ligase. Moreover, association between the brc-1-brd-1 heterodimer and rad-51 and let-70, probably requires DNA checkpoint proteins such as atl-1 and mre-11 in order to induce ubiquitination at DNA damage sites. To this end, the brc-1-brd-1 heterodimer coordinates a diverse range of cellular pathways such as DNA damage repair, ubiquitination and transcriptional regulation to maintain genomic stability. The sequence is that of Breast cancer type 1 susceptibility protein homolog from Caenorhabditis elegans.